The primary structure comprises 89 residues: Small ribosomal subunit protein uS15 (89 aa).

Residues 1–11 show a composition bias toward basic and acidic residues; sequence MSITAERKAEV. The interval 1-25 is disordered; it reads MSITAERKAEVIKTNARKSGDTGSP.

This sequence belongs to the universal ribosomal protein uS15 family. As to quaternary structure, part of the 30S ribosomal subunit. Forms a bridge to the 50S subunit in the 70S ribosome, contacting the 23S rRNA.

Functionally, one of the primary rRNA binding proteins, it binds directly to 16S rRNA where it helps nucleate assembly of the platform of the 30S subunit by binding and bridging several RNA helices of the 16S rRNA. Its function is as follows. Forms an intersubunit bridge (bridge B4) with the 23S rRNA of the 50S subunit in the ribosome. This Nitrobacter hamburgensis (strain DSM 10229 / NCIMB 13809 / X14) protein is Small ribosomal subunit protein uS15.